Reading from the N-terminus, the 905-residue chain is Coatomer subunit beta' (905 aa).

WD repeat units lie at residues 13-52 (AMSD…LVKT), 55-94 (VCDL…RVHM), 97-136 (AHSD…SCSQ), 140-180 (GHTH…PNFT), 183-224 (GHEK…CVQT), 227-266 (GHAQ…LEST), 350-388 (SCEI…NKSF), and 390-425 (SAQE…KSFK). Lys-627 bears the N6-acetyllysine mark. The stretch at 746–783 (IRTGRLPEAAFLARTYLPSQVSRVVKLWRENLSKVNQK) is one WD 9 repeat. A disordered region spans residues 837 to 905 (EEAKRFQPSR…INLDEDILDD (69 aa)). Ser-859 is subject to Phosphoserine. Residues 867 to 891 (QTTHKEEKSFQELEDDLDTMELEDI) adopt a coiled-coil conformation. The segment covering 878 to 905 (ELEDDLDTMELEDIDTTDINLDEDILDD) has biased composition (acidic residues).

Belongs to the WD repeat COPB2 family. As to quaternary structure, oligomeric complex that consists of at least the alpha, beta, beta', gamma, delta, epsilon and zeta subunits. Probably interacts with PEX11A. Interacts with JAGN1. Interacts with SCYL1.

The protein localises to the cytoplasm. It localises to the cytosol. Its subcellular location is the golgi apparatus membrane. It is found in the cytoplasmic vesicle. The protein resides in the COPI-coated vesicle membrane. Functionally, the coatomer is a cytosolic protein complex that binds to dilysine motifs and reversibly associates with Golgi non-clathrin-coated vesicles, which further mediate biosynthetic protein transport from the ER, via the Golgi up to the trans Golgi network. Coatomer complex is required for budding from Golgi membranes, and is essential for the retrograde Golgi-to-ER transport of dilysine-tagged proteins. In mammals, the coatomer can only be recruited by membranes associated to ADP-ribosylation factors (ARFs), which are small GTP-binding proteins; the complex also influences the Golgi structural integrity, as well as the processing, activity, and endocytic recycling of LDL receptors. This coatomer complex protein, essential for Golgi budding and vesicular trafficking, is a selective binding protein (RACK) for protein kinase C, epsilon type. It binds to Golgi membranes in a GTP-dependent manner. The polypeptide is Coatomer subunit beta' (Copb2) (Rattus norvegicus (Rat)).